A 325-amino-acid chain; its full sequence is uncharacterized protein (325 aa).

A disordered region spans residues 1-32 (MKQEYIPLDEFPNKSNEGMLNDEGTSSSGLST). Over residues 23–32 (EGTSSSGLST) the composition is skewed to low complexity. Residues 135–223 (AEEISNLKTS…LKKREDLLRL (89 aa)) adopt a coiled-coil conformation.

It is found in the cytoplasm. The protein resides in the cytoskeleton. Its subcellular location is the microtubule organizing center. The protein localises to the spindle pole body. This is an uncharacterized protein from Schizosaccharomyces pombe (strain 972 / ATCC 24843) (Fission yeast).